The sequence spans 258 residues: Protein OS-9 homolog (258 aa).

Positions 1 to 18 (MNWTSLVYLWFIFKSIFA) are cleaved as a signal peptide. N2, N51, and N70 each carry an N-linked (GlcNAc...) asparagine glycan. The 124-residue stretch at 114–237 (TSCVFSFNLH…HINVPKLCSL (124 aa)) folds into the MRH domain. C116 and C132 are disulfide-bonded. Positions 127 and 139 each coordinate a mannooligosaccharide derivative. An N-linked (GlcNAc...) asparagine glycan is attached at N165. Disulfide bonds link C193–C223 and C208–C235. A mannooligosaccharide derivative is bound by residues D194, R200, E219, and Y225.

The protein belongs to the OS-9 family. Interacts with missfolded ER lumenal proteins.

The protein resides in the endoplasmic reticulum membrane. Its function is as follows. Lectin involved in the quality control of the secretory pathway. As a member of the endoplasmic reticulum-associated degradation lumenal (ERAD-L) surveillance system, targets misfolded endoplasmic reticulum lumenal glycoproteins for degradation. The protein is Protein OS-9 homolog (YOS9) of Candida albicans (strain SC5314 / ATCC MYA-2876) (Yeast).